The primary structure comprises 233 residues: Uridylate kinase (233 aa).

7–10 is a binding site for ATP; sequence KISG. G49 provides a ligand contact to UMP. Residues G50 and R54 each contribute to the ATP site. UMP contacts are provided by residues D68 and 129–136; that span reads TGNPFFTT. ATP-binding residues include T156, Y162, and D165.

Belongs to the UMP kinase family. In terms of assembly, homohexamer.

The protein localises to the cytoplasm. The catalysed reaction is UMP + ATP = UDP + ADP. It functions in the pathway pyrimidine metabolism; CTP biosynthesis via de novo pathway; UDP from UMP (UMPK route): step 1/1. Inhibited by UTP. Catalyzes the reversible phosphorylation of UMP to UDP. The chain is Uridylate kinase from Neorickettsia sennetsu (strain ATCC VR-367 / Miyayama) (Ehrlichia sennetsu).